A 508-amino-acid polypeptide reads, in one-letter code: Photosystem II CP47 reaction center protein (508 aa).

6 helical membrane passes run serine 21–serine 36, isoleucine 101–tryptophan 115, glycine 140–phenylalanine 156, isoleucine 203–serine 218, valine 237–valine 252, and serine 457–arginine 472.

This sequence belongs to the PsbB/PsbC family. PsbB subfamily. PSII is composed of 1 copy each of membrane proteins PsbA, PsbB, PsbC, PsbD, PsbE, PsbF, PsbH, PsbI, PsbJ, PsbK, PsbL, PsbM, PsbT, PsbX, PsbY, PsbZ, Psb30/Ycf12, at least 3 peripheral proteins of the oxygen-evolving complex and a large number of cofactors. It forms dimeric complexes. It depends on Binds multiple chlorophylls. PSII binds additional chlorophylls, carotenoids and specific lipids. as a cofactor.

It localises to the plastid. It is found in the chloroplast thylakoid membrane. In terms of biological role, one of the components of the core complex of photosystem II (PSII). It binds chlorophyll and helps catalyze the primary light-induced photochemical processes of PSII. PSII is a light-driven water:plastoquinone oxidoreductase, using light energy to abstract electrons from H(2)O, generating O(2) and a proton gradient subsequently used for ATP formation. The sequence is that of Photosystem II CP47 reaction center protein from Morus indica (Mulberry).